Reading from the N-terminus, the 132-residue chain is Auxin-responsive protein SAUR72 (132 aa).

The disordered stretch occupies residues 22–54 (SDSQRPSRRSESFLRSSVTRRSKKQTSSVPEGH). The span at 23–33 (DSQRPSRRSES) shows a compositional bias: basic and acidic residues.

It belongs to the ARG7 family. In terms of assembly, interacts with and inhibits PP2C-D subfamily of type 2C phosphatases such as PP2C67/PP2C-D1. As to expression, highly expressed in the steles of roots and hypocotyls.

The protein resides in the cytoplasm. Its function is as follows. Provide a mechanistic link between auxin and plasma membrane H(+)-ATPases (PM H(+)-ATPases, e.g. AHA1 and AHA2), and triggers PM H(+)-ATPases activity by promoting phosphorylation of their C-terminal autoinhibitory domain as a result of PP2C-D subfamily of type 2C phosphatases inhibition, thus leading to the acidification of the apoplast and the facilitation of solutes and water uptake to drive cell expansion. Plays a role in the regulation of cell expansion, root meristem patterning and auxin transport. This chain is Auxin-responsive protein SAUR72, found in Arabidopsis thaliana (Mouse-ear cress).